Here is a 77-residue protein sequence, read N- to C-terminus: uncharacterized protein (77 aa).

Composition is skewed to basic and acidic residues over residues 1–24 (CPVAEEHFLVPAHEARGTQGEDQR) and 37–58 (EGPKLGEERPKPEAGALEERGP). Residues 1–77 (CPVAEEHFLV…RHGPKRKPAK (77 aa)) form a disordered region. Over residues 66-77 (RPRHGPKRKPAK) the composition is skewed to basic residues.

This is an uncharacterized protein from Macaca fascicularis (Crab-eating macaque).